Consider the following 96-residue polypeptide: MTIRPLHDRVVVKRLEAEEKTASGIVLPGAAAEKPDMGEVIAVGAGKIGKDGARRPLDVKAGDKIIFGKYSGQTVKADGEELLVMREEDIFGIVEK.

The protein belongs to the GroES chaperonin family. In terms of assembly, heptamer of 7 subunits arranged in a ring. Interacts with the chaperonin GroEL.

Its subcellular location is the cytoplasm. Together with the chaperonin GroEL, plays an essential role in assisting protein folding. The GroEL-GroES system forms a nano-cage that allows encapsulation of the non-native substrate proteins and provides a physical environment optimized to promote and accelerate protein folding. GroES binds to the apical surface of the GroEL ring, thereby capping the opening of the GroEL channel. This Neisseria gonorrhoeae (strain ATCC 700825 / FA 1090) protein is Co-chaperonin GroES.